A 209-amino-acid polypeptide reads, in one-letter code: Peptide methionine sulfoxide reductase MsrA (209 aa).

Cys-51 is an active-site residue.

This sequence belongs to the MsrA Met sulfoxide reductase family.

It catalyses the reaction L-methionyl-[protein] + [thioredoxin]-disulfide + H2O = L-methionyl-(S)-S-oxide-[protein] + [thioredoxin]-dithiol. It carries out the reaction [thioredoxin]-disulfide + L-methionine + H2O = L-methionine (S)-S-oxide + [thioredoxin]-dithiol. Has an important function as a repair enzyme for proteins that have been inactivated by oxidation. Catalyzes the reversible oxidation-reduction of methionine sulfoxide in proteins to methionine. In Vibrio vulnificus (strain CMCP6), this protein is Peptide methionine sulfoxide reductase MsrA.